The primary structure comprises 1131 residues: Phytochrome a (1131 aa).

Residues 1 to 23 are compositionally biased toward low complexity; sequence MSSSRPAHSSSSSSRTRQSSQAR. The disordered stretch occupies residues 1–26; that stretch reads MSSSRPAHSSSSSSRTRQSSQARILA. The GAF domain maps to 219–404; the sequence is SMEALCNTVV…VFAVHVNKEF (186 aa). Residue Cys-324 participates in phytochromobilin binding. 2 consecutive PAS domains span residues 620–690 and 750–834; these read VTSE…LQGK and VEGD…LAGE. A Histidine kinase domain is found at 904 to 1124; that stretch reads YMRHAINKPL…TFILTAELAA (221 aa).

This sequence belongs to the phytochrome family. As to quaternary structure, homodimer. Post-translationally, contains one covalently linked phytochromobilin chromophore.

Its function is as follows. Regulatory photoreceptor which exists in two forms that are reversibly interconvertible by light: the Pr form that absorbs maximally in the red region of the spectrum and the Pfr form that absorbs maximally in the far-red region. Photoconversion of Pr to Pfr induces an array of morphogenic responses, whereas reconversion of Pfr to Pr cancels the induction of those responses. Pfr controls the expression of a number of nuclear genes including those encoding the small subunit of ribulose-bisphosphate carboxylase, chlorophyll A/B binding protein, protochlorophyllide reductase, rRNA, etc. It also controls the expression of its own gene(s) in a negative feedback fashion. The protein is Phytochrome a (PHYA) of Sorghum bicolor (Sorghum).